The sequence spans 534 residues: Cysteine/serine-rich nuclear protein 2 (534 aa).

Met-1 carries the N-acetylmethionine modification. Disordered stretches follow at residues 1 to 52 (MDAF…FTPT) and 480 to 534 (DCGL…PLAV). The segment covering 31-40 (SSDSADSCDS) has biased composition (low complexity). The span at 42 to 52 (NPPTTASFTPT) shows a compositional bias: polar residues. Residues 480–492 (DCGLKEPESEDLH) are compositionally biased toward basic and acidic residues.

The protein belongs to the AXUD1 family. Highest expression detected in thymus, brain and ovary. Low levels detected in naive T-cells.

It localises to the nucleus. Functionally, binds to the consensus sequence 5'-AGAGTG-3' and has transcriptional activator activity. May play a role in apoptosis. In Mus musculus (Mouse), this protein is Cysteine/serine-rich nuclear protein 2 (Csrnp2).